The primary structure comprises 247 residues: Phosphonates import ATP-binding protein PhnC (247 aa).

The ABC transporter domain maps to 5 to 246 (IEVKNLVKNY…EDDIRKVYQT (242 aa)). 37-44 (GESGAGKS) is an ATP binding site.

This sequence belongs to the ABC transporter superfamily. Phosphonates importer (TC 3.A.1.9.1) family. As to quaternary structure, the complex is composed of two ATP-binding proteins (PhnC), two transmembrane proteins (PhnE) and a solute-binding protein (PhnD).

Its subcellular location is the cell inner membrane. The enzyme catalyses phosphonate(out) + ATP + H2O = phosphonate(in) + ADP + phosphate + H(+). Functionally, part of the ABC transporter complex PhnCDE involved in phosphonates import. Responsible for energy coupling to the transport system. The polypeptide is Phosphonates import ATP-binding protein PhnC (Fusobacterium nucleatum subsp. nucleatum (strain ATCC 25586 / DSM 15643 / BCRC 10681 / CIP 101130 / JCM 8532 / KCTC 2640 / LMG 13131 / VPI 4355)).